The following is a 528-amino-acid chain: ATP synthase subunit alpha 1 (528 aa).

177–184 provides a ligand contact to ATP; sequence GDRQTGKT.

It belongs to the ATPase alpha/beta chains family. F-type ATPases have 2 components, CF(1) - the catalytic core - and CF(0) - the membrane proton channel. CF(1) has five subunits: alpha(3), beta(3), gamma(1), delta(1), epsilon(1). CF(0) has three main subunits: a(1), b(2) and c(9-12). The alpha and beta chains form an alternating ring which encloses part of the gamma chain. CF(1) is attached to CF(0) by a central stalk formed by the gamma and epsilon chains, while a peripheral stalk is formed by the delta and b chains.

The protein resides in the cell inner membrane. It catalyses the reaction ATP + H2O + 4 H(+)(in) = ADP + phosphate + 5 H(+)(out). In terms of biological role, produces ATP from ADP in the presence of a proton gradient across the membrane. The alpha chain is a regulatory subunit. In Pseudoalteromonas atlantica (strain T6c / ATCC BAA-1087), this protein is ATP synthase subunit alpha 1.